The following is a 262-amino-acid chain: F-actin-capping protein subunit alpha (262 aa).

Belongs to the F-actin-capping protein alpha subunit family. Heterodimer of an alpha and a beta subunit.

The protein resides in the cytoplasm. The protein localises to the cytoskeleton. Functionally, F-actin-capping proteins bind in a Ca(2+)-independent manner to the fast growing ends of actin filaments (barbed end) thereby blocking the exchange of subunits at these ends. Unlike other capping proteins (such as gelsolin and severin), these proteins do not sever actin filaments. The protein is F-actin-capping protein subunit alpha (CAP1) of Yarrowia lipolytica (strain CLIB 122 / E 150) (Yeast).